The sequence spans 488 residues: Serine/threonine-protein kinase 32C (488 aa).

The disordered stretch occupies residues 1-56 (MRSGAERRGSSAAAPPSSPPPGRARPAGSDVSPALPPPAASQPRARDAGDARAQPR). Ser-10, Ser-17, and Ser-18 each carry phosphoserine. A compositionally biased stretch (low complexity) spans 24-33 (ARPAGSDVSP). In terms of domain architecture, Protein kinase spans 94 to 354 (FQILRAIGKG…LQDMQTAPSL (261 aa)). Residues 100–108 (IGKGSFGKV) and Lys-123 contribute to the ATP site. Asp-217 acts as the Proton acceptor in catalysis. A compositionally biased stretch (basic residues) spans 397-406 (HKKKKRLAKN). Disordered regions lie at residues 397–420 (HKKK…QSEN) and 443–488 (KRSQ…SGSS).

It belongs to the protein kinase superfamily. Ser/Thr protein kinase family. Requires Mg(2+) as cofactor.

It catalyses the reaction L-seryl-[protein] + ATP = O-phospho-L-seryl-[protein] + ADP + H(+). The catalysed reaction is L-threonyl-[protein] + ATP = O-phospho-L-threonyl-[protein] + ADP + H(+). This is Serine/threonine-protein kinase 32C from Mus musculus (Mouse).